The primary structure comprises 224 residues: Putative adhesin RMA_1308 (224 aa).

The N-terminal stretch at 1–22 (MQKLLLIAATSATILSSSLSFA) is a signal peptide.

The polypeptide is Putative adhesin RMA_1308 (Rickettsia massiliae (strain Mtu5)).